A 407-amino-acid chain; its full sequence is Peptidase T (407 aa).

His82 lines the Zn(2+) pocket. Asp84 is a catalytic residue. Asp143 is a Zn(2+) binding site. Glu177 (proton acceptor) is an active-site residue. 3 residues coordinate Zn(2+): Glu178, Asp200, and His382.

Belongs to the peptidase M20B family. Requires Zn(2+) as cofactor.

Its subcellular location is the cytoplasm. The enzyme catalyses Release of the N-terminal residue from a tripeptide.. Cleaves the N-terminal amino acid of tripeptides. This is Peptidase T from Streptococcus thermophilus (strain CNRZ 1066).